The primary structure comprises 326 residues: Probable cell division protein WhiA (326 aa).

The H-T-H motif DNA-binding region spans 275 to 308 (SLEELGQLAEPPMTKDAVAGRIRRLLAMADKRAR).

Belongs to the WhiA family.

Its function is as follows. Involved in cell division and chromosome segregation. In Saccharopolyspora erythraea (strain ATCC 11635 / DSM 40517 / JCM 4748 / NBRC 13426 / NCIMB 8594 / NRRL 2338), this protein is Probable cell division protein WhiA.